A 415-amino-acid polypeptide reads, in one-letter code: Adenylosuccinate synthetase (415 aa).

GTP is bound by residues 12 to 18 (GDEGKGK) and 40 to 42 (GHT). The active-site Proton acceptor is the D13. 2 residues coordinate Mg(2+): D13 and G40. IMP contacts are provided by residues 13–16 (DEGK), 38–41 (NAGH), T125, R139, Q219, T234, and R298. The Proton donor role is filled by H41. 294 to 300 (TTTGRPR) is a binding site for substrate. GTP is bound by residues R300, 326 to 328 (KLD), and 404 to 406 (STG).

The protein belongs to the adenylosuccinate synthetase family. As to quaternary structure, homodimer. Mg(2+) is required as a cofactor.

Its subcellular location is the cytoplasm. It catalyses the reaction IMP + L-aspartate + GTP = N(6)-(1,2-dicarboxyethyl)-AMP + GDP + phosphate + 2 H(+). The protein operates within purine metabolism; AMP biosynthesis via de novo pathway; AMP from IMP: step 1/2. Functionally, plays an important role in the de novo pathway of purine nucleotide biosynthesis. Catalyzes the first committed step in the biosynthesis of AMP from IMP. The protein is Adenylosuccinate synthetase of Wolinella succinogenes (strain ATCC 29543 / DSM 1740 / CCUG 13145 / JCM 31913 / LMG 7466 / NCTC 11488 / FDC 602W) (Vibrio succinogenes).